Consider the following 458-residue polypeptide: GDP-fucose protein O-fucosyltransferase 3 (458 aa).

Topologically, residues Met1–Ser11 are cytoplasmic. A helical; Signal-anchor for type II membrane protein transmembrane segment spans residues Phe12–Leu32. Over Gly33 to Asp458 the chain is Lumenal. 3 N-linked (GlcNAc...) asparagine glycosylation sites follow: Asn92, Asn150, and Asn300. Cys371 and Cys374 are disulfide-bonded. Asn445 carries N-linked (GlcNAc...) asparagine glycosylation.

This sequence belongs to the glycosyltransferase 10 family.

It localises to the endoplasmic reticulum membrane. The enzyme catalyses L-threonyl-[protein] + GDP-beta-L-fucose = 3-O-(alpha-L-fucosyl)-L-threonyl-[protein] + GDP + H(+). It catalyses the reaction L-seryl-[protein] + GDP-beta-L-fucose = 3-O-(alpha-L-fucosyl)-L-seryl-[protein] + GDP + H(+). The protein operates within protein modification; protein glycosylation. Its function is as follows. Protein O-fucosyltransferase that specifically catalyzes O-fucosylation of serine or threonine residues in EMI domains of target proteins. Attaches fucose through an O-glycosidic linkage. O-fucosylation of EMI domain-containing proteins may be required for facilitating protein folding and secretion. The sequence is that of GDP-fucose protein O-fucosyltransferase 3 (fut10) from Danio rerio (Zebrafish).